A 319-amino-acid chain; its full sequence is L-threo-3-hydroxyaspartate ammonia-lyase (319 aa).

N6-(pyridoxal phosphate)lysine is present on Lys53. Pyridoxal 5'-phosphate is bound by residues Asn80, 179-183 (GGGGM), and Thr304.

It belongs to the serine/threonine dehydratase family. May be either a monomer or a homodimer. It depends on pyridoxal 5'-phosphate as a cofactor. Mn(2+) serves as cofactor. Mg(2+) is required as a cofactor. Requires Ca(2+) as cofactor.

The enzyme catalyses (3S)-3-hydroxy-L-aspartate = oxaloacetate + NH4(+). With respect to regulation, is strongly inhibited by hydroxylamine and EDTA in vitro. Its function is as follows. Catalyzes the deamination of L-threo-3-hydroxyaspartate to oxaloacetate and ammonia. Shows a high specificity towards L-threo-3-hydroxyaspartate as other 3-hydroxyaminoacids, i.e. D,L-erythro- and D-threo-3-hydroxyaspartate, D-threonine, L-threonine, D,L-allothreonine, D,L-threo-3-phenylserine, D-serine, and L-serine, are not substrates for this enzyme. Exhibits no detectable serine and aspartate racemase activity. Might play a role in the detoxification of naturally occurring 3-hydroxyaspartate in Pseudomonas sp. T62 cells. This Pseudomonas sp protein is L-threo-3-hydroxyaspartate ammonia-lyase.